We begin with the raw amino-acid sequence, 237 residues long: Phosphoribosylaminoimidazole-succinocarboxamide synthase (237 aa).

It belongs to the SAICAR synthetase family.

It carries out the reaction 5-amino-1-(5-phospho-D-ribosyl)imidazole-4-carboxylate + L-aspartate + ATP = (2S)-2-[5-amino-1-(5-phospho-beta-D-ribosyl)imidazole-4-carboxamido]succinate + ADP + phosphate + 2 H(+). Its pathway is purine metabolism; IMP biosynthesis via de novo pathway; 5-amino-1-(5-phospho-D-ribosyl)imidazole-4-carboxamide from 5-amino-1-(5-phospho-D-ribosyl)imidazole-4-carboxylate: step 1/2. The sequence is that of Phosphoribosylaminoimidazole-succinocarboxamide synthase from Campylobacter fetus subsp. fetus (strain 82-40).